A 553-amino-acid chain; its full sequence is Hydroxylamine reductase (553 aa).

[2Fe-2S] cluster is bound by residues cysteine 3, cysteine 6, cysteine 18, and cysteine 25. Histidine 252, glutamate 276, cysteine 320, cysteine 408, cysteine 436, cysteine 461, glutamate 495, and lysine 497 together coordinate hybrid [4Fe-2O-2S] cluster. Cysteine 408 bears the Cysteine persulfide mark.

This sequence belongs to the HCP family. The cofactor is [2Fe-2S] cluster. It depends on hybrid [4Fe-2O-2S] cluster as a cofactor.

It localises to the cytoplasm. It carries out the reaction A + NH4(+) + H2O = hydroxylamine + AH2 + H(+). Functionally, catalyzes the reduction of hydroxylamine to form NH(3) and H(2)O. This chain is Hydroxylamine reductase, found in Aliivibrio fischeri (strain MJ11) (Vibrio fischeri).